We begin with the raw amino-acid sequence, 62 residues long: Large ribosomal subunit protein bL28 (62 aa).

Residues Met-1–Lys-26 form a disordered region. Residues Ser-11–His-20 are compositionally biased toward polar residues.

This sequence belongs to the bacterial ribosomal protein bL28 family.

This is Large ribosomal subunit protein bL28 from Exiguobacterium sp. (strain ATCC BAA-1283 / AT1b).